Here is a 162-residue protein sequence, read N- to C-terminus: Putative pre-16S rRNA nuclease (162 aa).

The protein belongs to the YqgF nuclease family.

The protein localises to the cytoplasm. Its function is as follows. Could be a nuclease involved in processing of the 5'-end of pre-16S rRNA. The chain is Putative pre-16S rRNA nuclease from Brucella abortus (strain S19).